Reading from the N-terminus, the 369-residue chain is Histidinol-phosphate aminotransferase 2 (369 aa).

Position 229 is an N6-(pyridoxal phosphate)lysine (Lys229).

It belongs to the class-II pyridoxal-phosphate-dependent aminotransferase family. Histidinol-phosphate aminotransferase subfamily. Homodimer. Requires pyridoxal 5'-phosphate as cofactor.

It catalyses the reaction L-histidinol phosphate + 2-oxoglutarate = 3-(imidazol-4-yl)-2-oxopropyl phosphate + L-glutamate. It participates in amino-acid biosynthesis; L-histidine biosynthesis; L-histidine from 5-phospho-alpha-D-ribose 1-diphosphate: step 7/9. This is Histidinol-phosphate aminotransferase 2 (hisC2) from Pseudomonas aeruginosa (strain ATCC 15692 / DSM 22644 / CIP 104116 / JCM 14847 / LMG 12228 / 1C / PRS 101 / PAO1).